We begin with the raw amino-acid sequence, 105 residues long: Prokineticin-1 (105 aa).

Residues 1 to 19 form the signal peptide; sequence MRGAVHIFIMLLLATASDC. Disulfide bonds link C26–C38, C32–C50, C37–C78, C60–C86, and C80–C96.

The protein belongs to the AVIT (prokineticin) family. Highly expressed in liver and ovary and weakly expressed in testis and placenta. Expressed in mucosa and mesenchyme of embryonic gut during enteric nervous system development (at protein level). Predominantly expressed in kidney and liver. Also expressed in lung, ovary, placenta and testis. In fetal liver, is restricted to and highly expressed in hepatocytes. In adult kidney, expression is restricted to the endothelial tubule cells. In placenta, expressed throughout gestation.

The protein resides in the secreted. Functionally, potently contracts gastrointestinal (GI) smooth muscle. Induces proliferation, migration and fenestration (the formation of membrane discontinuities) in capillary endothelial cells. Induces proliferation and differentiation, but not migration, of enteric neural crest cells. Directly influences neuroblastoma progression by promoting the proliferation and migration of neuroblastoma cells. Positively regulates PTGS2 expression and prostaglandin synthesis. May play a role in placentation. May play a role in normal and pathological testis angiogenesis. This Mus musculus (Mouse) protein is Prokineticin-1.